The primary structure comprises 655 residues: p-hydroxybenzoic acid efflux pump subunit AaeB (655 aa).

11 consecutive transmembrane segments (helical) span residues 13-33 (FAVK…HFQL), 38-58 (WAVL…GGEP), 69-89 (LRII…ISMI), 93-113 (LLMI…SSLV), 121-141 (WGLS…EPLL), 152-172 (EIVI…PRSI), 370-390 (LFWL…IAVV), 407-427 (FIYG…VIIP), 431-451 (QSML…GIEV), 459-479 (MGAL…TFHF), and 482-502 (FLDS…VILL).

This sequence belongs to the aromatic acid exporter ArAE (TC 2.A.85) family.

It localises to the cell inner membrane. In terms of biological role, forms an efflux pump with AaeA. Could function as a metabolic relief valve, allowing to eliminate certain compounds when they accumulate to high levels in the cell. This chain is p-hydroxybenzoic acid efflux pump subunit AaeB, found in Salmonella dublin (strain CT_02021853).